The primary structure comprises 217 residues: Cysteine-rich protein 3 (217 aa).

Positions 3–64 constitute an LIM zinc-binding 1 domain; the sequence is WTCPRCQQPV…KPCYGALFGP (62 aa). The segment at 84-112 is disordered; it reads PGCTTPLSPSSFSPPRPRTGLPQGKKSPP. The LIM zinc-binding 2 domain maps to 122–183; that stretch reads SLCPGCGEPV…VPCYGYLFGP (62 aa).

In terms of tissue distribution, expressed in most tissues, but not in skeletal muscle.

The protein localises to the cytoplasm. The protein is Cysteine-rich protein 3 (CRIP3) of Homo sapiens (Human).